The sequence spans 216 residues: Small ribosomal subunit protein uS3c (216 aa).

Residues 39–109 (IRSYINRELE…SIRINVIELT (71 aa)) enclose the KH type-2 domain.

Belongs to the universal ribosomal protein uS3 family. In terms of assembly, part of the 30S ribosomal subunit.

The protein localises to the plastid. It localises to the chloroplast. In Guillardia theta (Cryptophyte), this protein is Small ribosomal subunit protein uS3c (rps3).